A 365-amino-acid polypeptide reads, in one-letter code: Aminomethyltransferase (365 aa).

It belongs to the GcvT family. As to quaternary structure, the glycine cleavage system is composed of four proteins: P, T, L and H.

The catalysed reaction is N(6)-[(R)-S(8)-aminomethyldihydrolipoyl]-L-lysyl-[protein] + (6S)-5,6,7,8-tetrahydrofolate = N(6)-[(R)-dihydrolipoyl]-L-lysyl-[protein] + (6R)-5,10-methylene-5,6,7,8-tetrahydrofolate + NH4(+). Functionally, the glycine cleavage system catalyzes the degradation of glycine. This chain is Aminomethyltransferase, found in Chlorobium phaeobacteroides (strain DSM 266 / SMG 266 / 2430).